The sequence spans 141 residues: Hemoglobin subunit alpha (141 aa).

A Globin domain is found at 1-141 (VLSPADKTNI…VSTVLVSKYR (141 aa)). Ser3 is modified (phosphoserine). Lys7 carries the N6-succinyllysine modification. Position 8 is a phosphothreonine (Thr8). An N6-succinyllysine modification is found at Lys11. The residue at position 16 (Lys16) is an N6-acetyllysine; alternate. Lys16 carries the post-translational modification N6-succinyllysine; alternate. Phosphotyrosine is present on Tyr24. Ser35 is subject to Phosphoserine. Lys40 carries the post-translational modification N6-succinyllysine. Ser49 carries the post-translational modification Phosphoserine. Residue His58 coordinates O2. Position 87 (His87) interacts with heme b. Ser102 bears the Phosphoserine mark. Thr108 bears the Phosphothreonine mark. A phosphoserine mark is found at Ser124 and Ser131. Thr134 carries the post-translational modification Phosphothreonine. Position 138 is a phosphoserine (Ser138).

Belongs to the globin family. As to quaternary structure, heterotetramer of two alpha chains and two beta chains. Red blood cells.

Functionally, involved in oxygen transport from the lung to the various peripheral tissues. Hemopressin acts as an antagonist peptide of the cannabinoid receptor CNR1. Hemopressin-binding efficiently blocks cannabinoid receptor CNR1 and subsequent signaling. The chain is Hemoglobin subunit alpha (HBA) from Myotis velifer (Mouse-eared bat).